Here is a 400-residue protein sequence, read N- to C-terminus: Methylamine dehydrogenase heavy chain (400 aa).

An N-terminal signal peptide occupies residues 1–27 (MTTFQPGRLAGQLAATALLAATCSAFA).

Belongs to the aromatic amine dehydrogenase heavy chain family. Tetramer of two light and two heavy chains.

The protein resides in the periplasm. The catalysed reaction is 2 oxidized [amicyanin] + methylamine + H2O = 2 reduced [amicyanin] + formaldehyde + NH4(+) + 2 H(+). In terms of biological role, methylamine dehydrogenase carries out the oxidation of methylamine. Electrons are passed from methylamine dehydrogenase to amicyanin. The protein is Methylamine dehydrogenase heavy chain (mauB) of Methylobacillus flagellatus (strain ATCC 51484 / DSM 6875 / VKM B-1610 / KT).